A 294-amino-acid chain; its full sequence is Cell division control protein 2 homolog 2 (294 aa).

The 284-residue stretch at 4-287 (YEKVEKIGEG…ARGALEHEYF (284 aa)) folds into the Protein kinase domain. ATP contacts are provided by residues 10–18 (IGEGTYGVV) and Lys33. Position 14 is a phosphothreonine (Thr14). The residue at position 15 (Tyr15) is a Phosphotyrosine. The active-site Proton acceptor is the Asp127. Thr161 carries the post-translational modification Phosphothreonine; by CAK.

It belongs to the protein kinase superfamily. CMGC Ser/Thr protein kinase family. CDC2/CDKX subfamily. As to expression, found in most organs including root, young leaf, stem, vegetative meristem and flower bud.

The catalysed reaction is L-seryl-[protein] + ATP = O-phospho-L-seryl-[protein] + ADP + H(+). The enzyme catalyses L-threonyl-[protein] + ATP = O-phospho-L-threonyl-[protein] + ADP + H(+). Phosphorylation at Thr-14 or Tyr-15 inactivates the enzyme, while phosphorylation at Thr-161 activates it. Its function is as follows. Plays a key role in the control of the eukaryotic cell cycle. Component of the kinase complex that phosphorylates the repetitive C-terminus of RNA polymerase II. In Medicago sativa (Alfalfa), this protein is Cell division control protein 2 homolog 2 (CDC2B).